We begin with the raw amino-acid sequence, 350 residues long: Inhibin beta E chain (350 aa).

A signal peptide spans 1-21; the sequence is MGLSNVQLWTILLWALAWVQS. Positions 22 to 236 are excised as a propeptide; it reads TRSACPSCGA…EPGAGRARRR (215 aa). Asparagine 198 carries an N-linked (GlcNAc...) asparagine glycan. Disulfide bonds link cysteine 240/cysteine 248, cysteine 247/cysteine 315, cysteine 276/cysteine 347, and cysteine 280/cysteine 349.

This sequence belongs to the TGF-beta family. In terms of assembly, homodimeric or heterodimeric through association with alpha and beta subunits, linked by one or more disulfide bonds. Inhibins are heterodimers of one alpha and one beta subunit. Activins are homo- or heterodimers of beta subunits only.

The protein localises to the secreted. Inhibins and activins inhibit and activate, respectively, the secretion of follitropin by the pituitary gland. Inhibins/activins are involved in regulating a number of diverse functions such as hypothalamic and pituitary hormone secretion, gonadal hormone secretion, germ cell development and maturation, erythroid differentiation, insulin secretion, nerve cell survival, embryonic axial development or bone growth, depending on their subunit composition. Inhibins appear to oppose the functions of activins. Its function is as follows. Activin E is a homodimer of INHBE secreted by the liver that plays a crucial role in regulating metabolic homeostasis particularly in lipid metabolism and energy homeostasis. Plays a central role in the regulation of adipose tissue lipolysis by preventing the influx of fatty acids from adipose tissue into the liver. Mechanistically, signals via ACVR1C to activate SMAD2/3 signaling, suppressing PPARG target genes in adipose tissue, thereby reducing liver lipid content and improving glycemic control. Induces beige adipocyte formation and thermogenesis in response to cold exposure. The sequence is that of Inhibin beta E chain (Inhbe) from Rattus norvegicus (Rat).